Here is a 620-residue protein sequence, read N- to C-terminus: E3 ubiquitin-protein ligase AMFR (620 aa).

7 helical membrane-spanning segments follow: residues 75–95 (LFVW…GKVI), 115–135 (FWNF…VQRV), 138–158 (VVLW…VQLC), 179–199 (VLAL…LCAL), 201–221 (GHIH…LVTV), 247–267 (SSYI…LDLM), and 269–289 (HIHM…VIFM). An RING-type; atypical zinc finger spans residues 334–372 (CAICWDSMTTARKLPCGHLFHNSCLRSWLEQDTSCPTCR). One can recognise a CUE domain in the interval 449–491 (QLNGMAHQIQEMFPQVPYHLILQDLQLTRSVEVTTDNILEGRI). Residues 510-526 (ASEDGAGASSGSEVAAP) are compositionally biased toward low complexity. Disordered stretches follow at residues 510 to 544 (ASED…SADE) and 569 to 598 (PEDG…DSVT). Residues 531–544 (FEVRGSRFSKSADE) show a composition bias toward basic and acidic residues. Positions 581 to 595 (DNDDSVPSIEDEDSD) are enriched in acidic residues.

As to expression, widely expressed.

The protein localises to the endoplasmic reticulum membrane. It catalyses the reaction [E2 ubiquitin-conjugating enzyme]-S-ubiquitinyl-L-cysteine + [acceptor protein]-L-cysteine = [E2 ubiquitin-conjugating enzyme]-L-cysteine + [acceptor protein]-S-ubiquitinyl-L-cysteine.. It functions in the pathway protein modification; protein ubiquitination. E3 ubiquitin-protein ligase that mediates the polyubiquitination of lysine and cysteine residues on target proteins. May participate in the final step of endoplasmic reticulum-associated degradation (ERAD). Required for proper lipid homeostasis. This chain is E3 ubiquitin-protein ligase AMFR, found in Danio rerio (Zebrafish).